A 172-amino-acid polypeptide reads, in one-letter code: uncharacterized protein (172 aa).

This is an uncharacterized protein from Pasteurella multocida (strain Pm70).